Reading from the N-terminus, the 471-residue chain is Tripartite motif-containing protein 60 (471 aa).

The RING-type zinc finger occupies 16-57 (CPICLEYLKDPVTINCGHNFCRSCLSVSWKDLDDTFPCPVCR). The B box-type zinc-finger motif lies at 92-133 (KENAMCEKHNQFLTLFCVKDLEILCTQCSFSTKHQKHYICPI). The Zn(2+) site is built by cysteine 97, histidine 100, cysteine 119, and histidine 125. Residues 171–223 (ELKKKVEYKREEINSEFEQIRLFLQNEQEMILRQIQDEEMNILAKLNENLVEL) are a coiled coil. Residues 277 to 470 (FSLPPQYSGL…LKICSVSDSE (194 aa)) form the B30.2/SPRY domain.

Belongs to the TRIM/RBCC family.

In terms of biological role, E3 SUMO-protein ligase that mediates SUMOylation of TAB2 leading to inhibition of NF-kappa-B and MAPK pathways by suppressing the TRAF6/TAB2/TAK1 complex. The protein is Tripartite motif-containing protein 60 (TRIM60) of Homo sapiens (Human).